Reading from the N-terminus, the 124-residue chain is Probable S-adenosyl-L-methionine-binding protein VNG_1115H (124 aa).

Positions 3-124 (ATPIGYADTR…PVLDLKPALD (122 aa)) constitute a TsaA-like domain. Residues 20 to 22 (PRQ), 58 to 59 (DD), Arg-78, and 111 to 114 (AHGS) contribute to the S-adenosyl-L-methionine site.

This sequence belongs to the tRNA methyltransferase O family.

The sequence is that of Probable S-adenosyl-L-methionine-binding protein VNG_1115H from Halobacterium salinarum (strain ATCC 700922 / JCM 11081 / NRC-1) (Halobacterium halobium).